The primary structure comprises 79 residues: RNA-binding protein Hfq (79 aa).

One can recognise a Sm domain in the interval 10-69 (DPFLNALRKEHVPVSIYLVNGIKLQGNIESFDQYVVLLRNTVTQMVYKHAISTVVPARPV).

Belongs to the Hfq family. As to quaternary structure, homohexamer.

Its function is as follows. RNA chaperone that binds small regulatory RNA (sRNAs) and mRNAs to facilitate mRNA translational regulation in response to envelope stress, environmental stress and changes in metabolite concentrations. Also binds with high specificity to tRNAs. In Burkholderia mallei (strain ATCC 23344), this protein is RNA-binding protein Hfq.